A 193-amino-acid chain; its full sequence is ATP-dependent Clp protease proteolytic subunit (193 aa).

Ser98 serves as the catalytic Nucleophile. His123 is an active-site residue.

This sequence belongs to the peptidase S14 family. In terms of assembly, fourteen ClpP subunits assemble into 2 heptameric rings which stack back to back to give a disk-like structure with a central cavity, resembling the structure of eukaryotic proteasomes.

It localises to the cytoplasm. It catalyses the reaction Hydrolysis of proteins to small peptides in the presence of ATP and magnesium. alpha-casein is the usual test substrate. In the absence of ATP, only oligopeptides shorter than five residues are hydrolyzed (such as succinyl-Leu-Tyr-|-NHMec, and Leu-Tyr-Leu-|-Tyr-Trp, in which cleavage of the -Tyr-|-Leu- and -Tyr-|-Trp bonds also occurs).. In terms of biological role, cleaves peptides in various proteins in a process that requires ATP hydrolysis. Has a chymotrypsin-like activity. Plays a major role in the degradation of misfolded proteins. This Haemophilus influenzae (strain 86-028NP) protein is ATP-dependent Clp protease proteolytic subunit.